The chain runs to 69 residues: Intrepicalcin (69 aa).

Positions 1-27 (MRQNTMTIIFIVFIVTFASLTIYGAEA) are cleaved as a signal peptide. Residues 28 to 36 (SEANFLERR) constitute a propeptide that is removed on maturation. Cystine bridges form between C39–C53, C46–C57, and C52–C68. Positions 59–60 (RR) are essential for stimulation of [3H]ryanodine binding to RYR1.

It belongs to the scorpion calcin family. As to expression, expressed by the venom gland.

Its subcellular location is the secreted. Functionally, this toxin stabilizes ryanodine receptor 1 (RyR1) opening in a long-lasting subconductance state (55% of the full conductance state). Furthermore, it triggers calcium release from sarcoplasmic vesicles (45.3 nM are enough to induce a sharp release, and 50% of the total calcium is released after toxin (100 nM) addition) probably by acting as a cell-penetrating peptide (CPP). In addition, it has been shown to dose-dependently stimulate ryanodine binding to RyR1 (EC(50)=17.4 nM). It also augments the bell-shaped calcium-[3H]ryanodine binding curve that is maximal at about 10 uM calcium concentration. It binds a different site as ryanodine. It acts synergistically with caffeine. In vivo, intracerebroventricular injection into mice induces neurotoxic symptoms, followed by death. The chain is Intrepicalcin from Thorellius intrepidus (Scorpion).